The primary structure comprises 300 residues: NAD kinase (300 aa).

D80 (proton acceptor) is an active-site residue. NAD(+) contacts are provided by residues 80-81 (DG), 154-155 (ND), R165, R182, D184, 195-200 (TAYALS), and Q253.

Belongs to the NAD kinase family. Requires a divalent metal cation as cofactor.

The protein localises to the cytoplasm. The enzyme catalyses NAD(+) + ATP = ADP + NADP(+) + H(+). Its function is as follows. Involved in the regulation of the intracellular balance of NAD and NADP, and is a key enzyme in the biosynthesis of NADP. Catalyzes specifically the phosphorylation on 2'-hydroxyl of the adenosine moiety of NAD to yield NADP. This chain is NAD kinase, found in Aromatoleum aromaticum (strain DSM 19018 / LMG 30748 / EbN1) (Azoarcus sp. (strain EbN1)).